The sequence spans 657 residues: Glycogen debranching enzyme (657 aa).

Asp336 functions as the Nucleophile in the catalytic mechanism. The Proton donor role is filled by Glu371. Over residues 458–467 (NEANGEENRD) the composition is skewed to basic and acidic residues. The interval 458–479 (NEANGEENRDGTNNNYSNNHGK) is disordered.

This sequence belongs to the glycosyl hydrolase 13 family.

It catalyses the reaction Hydrolysis of (1-&gt;6)-alpha-D-glucosidic linkages to branches with degrees of polymerization of three or four glucose residues in limit dextrin.. It participates in glycan degradation; glycogen degradation. In terms of biological role, removes maltotriose and maltotetraose chains that are attached by 1,6-alpha-linkage to the limit dextrin main chain, generating a debranched limit dextrin. The polypeptide is Glycogen debranching enzyme (Escherichia coli (strain K12 / DH10B)).